Reading from the N-terminus, the 187-residue chain is uncharacterized protein (187 aa).

Positions Met1–Thr28 are cleaved as a signal peptide. Residues Asn58, Asn70, Asn156, and Asn168 are each glycosylated (N-linked (GlcNAc...) asparagine).

It localises to the secreted. This is an uncharacterized protein from Caenorhabditis elegans.